The primary structure comprises 341 residues: Guanine nucleotide-binding protein subunit beta (341 aa).

7 WD repeats span residues 54 to 84, 96 to 126, 142 to 171, 183 to 213, 225 to 255, 269 to 299, and 311 to 341; these read GHLA…IVWD, LRSS…SIYS, GHTG…ALWN, GHTG…KLFD, GHES…RLFD, NIIC…NVWD, and GHDN…KIWN.

It belongs to the WD repeat G protein beta family. G proteins are composed of 3 units, alpha, beta and gamma.

Its function is as follows. Guanine nucleotide-binding proteins (G proteins) are involved as a modulator or transducer in various transmembrane signaling systems. The beta and gamma chains are required for the GTPase activity, for replacement of GDP by GTP, and for G protein-effector interaction. The protein is Guanine nucleotide-binding protein subunit beta of Loligo forbesii (Veined squid).